Here is a 127-residue protein sequence, read N- to C-terminus: Aspartate 1-decarboxylase (127 aa).

The active-site Schiff-base intermediate with substrate; via pyruvic acid is the S25. The residue at position 25 (S25) is a Pyruvic acid (Ser). Residue T57 coordinates substrate. Y58 acts as the Proton donor in catalysis. A substrate-binding site is contributed by 73-75 (GAA).

It belongs to the PanD family. Heterooctamer of four alpha and four beta subunits. Pyruvate serves as cofactor. In terms of processing, is synthesized initially as an inactive proenzyme, which is activated by self-cleavage at a specific serine bond to produce a beta-subunit with a hydroxyl group at its C-terminus and an alpha-subunit with a pyruvoyl group at its N-terminus.

It is found in the cytoplasm. It catalyses the reaction L-aspartate + H(+) = beta-alanine + CO2. The protein operates within cofactor biosynthesis; (R)-pantothenate biosynthesis; beta-alanine from L-aspartate: step 1/1. Functionally, catalyzes the pyruvoyl-dependent decarboxylation of aspartate to produce beta-alanine. In Shouchella clausii (strain KSM-K16) (Alkalihalobacillus clausii), this protein is Aspartate 1-decarboxylase.